The primary structure comprises 301 residues: Glycine--tRNA ligase alpha subunit (301 aa).

It belongs to the class-II aminoacyl-tRNA synthetase family. As to quaternary structure, tetramer of two alpha and two beta subunits.

It is found in the cytoplasm. The catalysed reaction is tRNA(Gly) + glycine + ATP = glycyl-tRNA(Gly) + AMP + diphosphate. The polypeptide is Glycine--tRNA ligase alpha subunit (Campylobacter hominis (strain ATCC BAA-381 / DSM 21671 / CCUG 45161 / LMG 19568 / NCTC 13146 / CH001A)).